A 511-amino-acid chain; its full sequence is LEM domain-containing protein 2 (511 aa).

The residue at position 2 (alanine 2) is an N-acetylalanine. Residues 2–42 (AGLSDLELRRELQALGFQPGPITDTTRNVYRNKLRRLRGEA) enclose the LEM domain. 2 disordered regions span residues 18–110 (FQPG…SDAS) and 128–206 (GLSY…AGRT). Residues 38–80 (LRGEARLRDDERLREDAGPREDAGPRGPERQREEARLREEAPL) are compositionally biased toward basic and acidic residues. Residues 80-112 (LRARPAASVLRSEPWPLSPSPPAPSAASDASGP) form an interaction with lamin A/C complexes region. The segment at 80-141 (LRARPAASVL…PPHAGPGPLR (62 aa)) is required for nuclear retention and interaction with LMNA isoform C. Low complexity-rich tracts occupy residues 81–94 (RARPAASVLRSEPW) and 172–183 (APPSASARPHSA). Helical transmembrane passes span 221–241 (LLLWASLGLLLGFLAILWVKM) and 385–405 (VTHVLIFFWCLAFLWGLLILL). The winged-Helix (WH) stretch occupies residues 403-511 (ILLKYRWRKL…KPSSFSDSER (109 aa)). Serine 505, serine 507, and serine 509 each carry phosphoserine.

As to quaternary structure, interacts (via N-terminus) with LMNA isoform C (via C-terminus) (in vitro). Interacts (via LEM domain) with BANF1. Interacts (via C-terminus) with CHMP7. Interacts (via N-terminus) with tubulin; the interaction causes microtubule bundling and stabilization (in vitro). Post-translationally, phosphorylated; strongly phosphorylated in mitosis compared to G1/S. In terms of tissue distribution, ubiquitously expressed, including liver, brain, heart, skeletal muscle, lung, testis, spleen, kidney and white adipose tissue.

It is found in the nucleus inner membrane. It localises to the nucleus envelope. The protein resides in the cytoplasm. Its subcellular location is the cytoskeleton. The protein localises to the spindle. Nuclear lamina-associated inner nuclear membrane protein that is involved in nuclear structure organization and maintenance of nuclear envelope (NE) integrity and NE reformation after mitosis. Plays a role as transmembrane adapter for the endosomal sorting complexes required for transport (ESCRT), and is thereby involved in ESCRT-mediated NE reformation. Promotes ESCRT-mediated NE closure by recruiting CHMP7 and downstream ESCRT-III proteins IST1/CHMP8 and CHMP2A to the reforming NE during anaphase. During nuclear reassembly, condenses into a liquid-like coating around microtubule spindles and coassembles with CHMP7 to form a macromolecular O-ring seal at the confluence between membranes, chromatin, and the spindle to facilitate early nuclear sealing. Plays a role in the organization of heterochromatin associated with the NE and in the maintenance of NE organization under mechanical stress. Required for embryonic development and is involved in regulation of several signaling pathways such as MAPK and AKT. Required for myoblast differentiation involving regulation of ERK signaling. Essential for cardiac homeostasis and proper heart function. The protein is LEM domain-containing protein 2 (Lemd2) of Mus musculus (Mouse).